Here is an 83-residue protein sequence, read N- to C-terminus: MEALGSGHYVGGSIRSMAAAALSGLAVRLSRPQGTRGSYGAFCKTLTRTLLTFFDLAWRLRKNFFYFYILASVILNVHLQVYI.

The helical transmembrane segment at Phe64–Tyr82 threads the bilayer.

The protein localises to the membrane. The chain is Small integral membrane protein 10 (SMIM10) from Homo sapiens (Human).